Here is a 464-residue protein sequence, read N- to C-terminus: Siroheme synthase (464 aa).

The tract at residues 1–203 is precorrin-2 dehydrogenase /sirohydrochlorin ferrochelatase; the sequence is MEFLPLFHNL…GQGAEAERML (203 aa). Residues 22 to 23 and 43 to 44 contribute to the NAD(+) site; these read EI and PE. Ser128 carries the post-translational modification Phosphoserine. The segment at 216 to 464 is uroporphyrinogen-III C-methyltransferase; it reads GEVYLVGAGP…AWFEGAQATL (249 aa). Residue Pro225 coordinates S-adenosyl-L-methionine. Asp248 serves as the catalytic Proton acceptor. Lys270 functions as the Proton donor in the catalytic mechanism. S-adenosyl-L-methionine contacts are provided by residues 301-303, Ile306, 331-332, Met383, and Gly412; these read GGD and TA.

In the N-terminal section; belongs to the precorrin-2 dehydrogenase / sirohydrochlorin ferrochelatase family. This sequence in the C-terminal section; belongs to the precorrin methyltransferase family.

The enzyme catalyses uroporphyrinogen III + 2 S-adenosyl-L-methionine = precorrin-2 + 2 S-adenosyl-L-homocysteine + H(+). It carries out the reaction precorrin-2 + NAD(+) = sirohydrochlorin + NADH + 2 H(+). It catalyses the reaction siroheme + 2 H(+) = sirohydrochlorin + Fe(2+). It participates in cofactor biosynthesis; adenosylcobalamin biosynthesis; precorrin-2 from uroporphyrinogen III: step 1/1. It functions in the pathway cofactor biosynthesis; adenosylcobalamin biosynthesis; sirohydrochlorin from precorrin-2: step 1/1. Its pathway is porphyrin-containing compound metabolism; siroheme biosynthesis; precorrin-2 from uroporphyrinogen III: step 1/1. The protein operates within porphyrin-containing compound metabolism; siroheme biosynthesis; siroheme from sirohydrochlorin: step 1/1. It participates in porphyrin-containing compound metabolism; siroheme biosynthesis; sirohydrochlorin from precorrin-2: step 1/1. Multifunctional enzyme that catalyzes the SAM-dependent methylations of uroporphyrinogen III at position C-2 and C-7 to form precorrin-2 via precorrin-1. Then it catalyzes the NAD-dependent ring dehydrogenation of precorrin-2 to yield sirohydrochlorin. Finally, it catalyzes the ferrochelation of sirohydrochlorin to yield siroheme. The sequence is that of Siroheme synthase from Pseudomonas syringae pv. syringae (strain B728a).